The chain runs to 432 residues: Adenosylhomocysteinase (432 aa).

Residue serine 2 is modified to N-acetylserine. 3 residues coordinate substrate: threonine 57, aspartate 131, and glutamate 156. Phosphoserine is present on serine 183. Residues 183 to 350 (SVTKSKFDNL…EGRLVNLGCA (168 aa)) are NAD binding. 2 residues coordinate substrate: lysine 186 and aspartate 190. N6-(2-hydroxyisobutyryl)lysine is present on lysine 186. At tyrosine 193 the chain carries Phosphotyrosine.

It belongs to the adenosylhomocysteinase family. Homotetramer. Interaction with AHCYL1. Requires NAD(+) as cofactor.

The protein resides in the cytoplasm. It localises to the melanosome. It is found in the nucleus. Its subcellular location is the endoplasmic reticulum. The enzyme catalyses S-adenosyl-L-homocysteine + H2O = L-homocysteine + adenosine. Its pathway is amino-acid biosynthesis; L-homocysteine biosynthesis; L-homocysteine from S-adenosyl-L-homocysteine: step 1/1. In terms of biological role, catalyzes the hydrolysis of S-adenosyl-L-homocysteine to form adenosine and homocysteine. Binds copper ions. The protein is Adenosylhomocysteinase (AHCY) of Sus scrofa (Pig).